The sequence spans 239 residues: MNIEQFQSMLGERGISLSPRQLEQFEMYFETLVEWNEKMNLTAITEKEEVYLKHFFDSITAAFYYDFSNPLSICDVGAGAGFPSIPLKICFPHLKVTIVDSLQKRINFLNHLAQKLELSDVAFCHDRAETFGKKEHVRESYDIVMARAVARLSVLSELCLPLVKVGGTFIAMKGAAANEEIENGKYAVEVLGGQLEEVSTFQLPFEESERNILLIKKKRKTPKKYPRKPGTPNKLPIEK.

Residues Gly77, Phe82, 128–129 (AE), and Arg147 contribute to the S-adenosyl-L-methionine site. The tract at residues 219–239 (RKTPKKYPRKPGTPNKLPIEK) is disordered.

This sequence belongs to the methyltransferase superfamily. RNA methyltransferase RsmG family.

It localises to the cytoplasm. In terms of biological role, specifically methylates the N7 position of guanine in position 535 of 16S rRNA. The chain is Ribosomal RNA small subunit methyltransferase G from Bacillus cytotoxicus (strain DSM 22905 / CIP 110041 / 391-98 / NVH 391-98).